Reading from the N-terminus, the 111-residue chain is Large ribosomal subunit protein uL24 (111 aa).

This sequence belongs to the universal ribosomal protein uL24 family. Part of the 50S ribosomal subunit.

In terms of biological role, one of two assembly initiator proteins, it binds directly to the 5'-end of the 23S rRNA, where it nucleates assembly of the 50S subunit. One of the proteins that surrounds the polypeptide exit tunnel on the outside of the subunit. This chain is Large ribosomal subunit protein uL24, found in Chlamydia pneumoniae (Chlamydophila pneumoniae).